Reading from the N-terminus, the 455-residue chain is Tubby-like F-box protein 1 (455 aa).

Residues 54-112 (ETPWANLPPELLRDVIKRLEESESVWPARRHVVACASVCRSWRDMCKEIVQSPELSGKI) enclose the F-box domain. Residues 386-414 (QPQPQPQPQPQPQPLTQPQPSGQTDGPDK) are disordered. Pro residues predominate over residues 388 to 402 (QPQPQPQPQPQPLTQ).

The protein belongs to the TUB family. Ubiquitous.

The protein is Tubby-like F-box protein 1 of Arabidopsis thaliana (Mouse-ear cress).